The following is a 46-amino-acid chain: Acetylajmalan esterase (46 aa).

Asn39 carries an N-linked (GlcNAc...) asparagine glycan.

This sequence belongs to the 'GDSL' lipolytic enzyme family.

The catalysed reaction is 17-O-acetylajmaline + H2O = ajmaline + acetate + H(+). It carries out the reaction 17-O-acetylnorajmaline + H2O = norajmaline + acetate + H(+). Functionally, deacetylates 17-O-acetylajmaline and 17-O-acetylnorajmaline, but is inactive toward other acetylated alkaloids. The chain is Acetylajmalan esterase from Rauvolfia verticillata (Common devil-pepper).